The chain runs to 654 residues: Acetyl-coenzyme A synthetase (654 aa).

CoA-binding positions include 190–193 (RGGK) and Thr313. Residues 389–391 (GEP), 413–418 (DTWWQT), Asp504, and Arg519 each bind ATP. Position 527 (Ser527) interacts with CoA. Arg530 serves as a coordination point for ATP. Mg(2+) contacts are provided by Val541, His543, and Val546. Lys613 bears the N6-acetyllysine mark.

It belongs to the ATP-dependent AMP-binding enzyme family. Mg(2+) is required as a cofactor. Acetylated. Deacetylation by the SIR2-homolog deacetylase activates the enzyme.

The enzyme catalyses acetate + ATP + CoA = acetyl-CoA + AMP + diphosphate. Its function is as follows. Catalyzes the conversion of acetate into acetyl-CoA (AcCoA), an essential intermediate at the junction of anabolic and catabolic pathways. AcsA undergoes a two-step reaction. In the first half reaction, AcsA combines acetate with ATP to form acetyl-adenylate (AcAMP) intermediate. In the second half reaction, it can then transfer the acetyl group from AcAMP to the sulfhydryl group of CoA, forming the product AcCoA. The protein is Acetyl-coenzyme A synthetase of Leptospira biflexa serovar Patoc (strain Patoc 1 / Ames).